The primary structure comprises 441 residues: MSYFEHLPAVRYEGPQTDNPFAYRHYDKDKLVLGKRMEDHLRVAVCYWHTFVWPGADMFGPGTFERPWHHAGDALEMAHAKADHAFELFSKLGTPFYTFHDLDVAPEGDSIKSYVNNFKAMTDVLARKQEQTGIKLLWGTANLFSHPRYAAGAATNPNPDVFAFAATQVLNALEATQRLGGANYVLWGGREGYETLLNTDLKREREQLGRFMSMVVEHKHKTGFKGALLIEPKPQEPTKHQYDYDVATVHGFLTQFGLQDEIRVNIEANHATLAGHSFHHEIANAFALGIFGSVDANRGDAQNGWDTDQFPNSVEELTLAFYEILRNGGFTTGGMNFDAKVRRQSIDPEDIVHGHIGAIDVLAVALERAAHLIEHDRLAAFKQQRYAGWDSDFGRKILAGGYSLESLASDAVQRNIAPRHVSGQQERLENIVNQAIFSSAK.

Active-site residues include histidine 100 and aspartate 103. Glutamate 231, glutamate 267, histidine 270, aspartate 295, aspartate 306, aspartate 308, and aspartate 338 together coordinate Mg(2+).

It belongs to the xylose isomerase family. In terms of assembly, homotetramer. Mg(2+) is required as a cofactor.

It localises to the cytoplasm. It catalyses the reaction alpha-D-xylose = alpha-D-xylulofuranose. The polypeptide is Xylose isomerase (Paraburkholderia phymatum (strain DSM 17167 / CIP 108236 / LMG 21445 / STM815) (Burkholderia phymatum)).